Here is a 94-residue protein sequence, read N- to C-terminus: Large ribosomal subunit protein uL23 (94 aa).

It belongs to the universal ribosomal protein uL23 family. In terms of assembly, part of the 50S ribosomal subunit. Contacts protein L29, and trigger factor when it is bound to the ribosome.

Functionally, one of the early assembly proteins it binds 23S rRNA. One of the proteins that surrounds the polypeptide exit tunnel on the outside of the ribosome. Forms the main docking site for trigger factor binding to the ribosome. In Mycoplasma mycoides subsp. mycoides SC (strain CCUG 32753 / NCTC 10114 / PG1), this protein is Large ribosomal subunit protein uL23.